A 383-amino-acid chain; its full sequence is Probable sphingolipid long chain base-responsive protein pil2 (383 aa).

Serine 162 carries the phosphoserine modification. Disordered stretches follow at residues 292-336 and 356-383; these read PRTD…EDYQ and GEED…PIAA. Positions 311 to 324 are enriched in low complexity; that stretch reads TTSGTTHSYTSTGS. 2 stretches are compositionally biased toward polar residues: residues 325 to 336 and 368 to 383; these read KRYSQMGTEDYQ and VAET…PIAA.

Post-translationally, phosphorylated by ksg1 and ppk21. Phosphorylation is regulated by sphingolipid long chain bases (LCBs).

Negative regulator of cell wall integrity (CWI) in unstressed cells, probably by inhibiting protein kinase ksg1/ppk21 activity and regulating their downstream CWI pathways pck2-MAP kinase pathway and protein kinase gad8 pathway. Activity may be regulated by the transient increase of sphingolipid long chain bases (LCBs) during heat stress. This is Probable sphingolipid long chain base-responsive protein pil2 (pil2) from Schizosaccharomyces pombe (strain 972 / ATCC 24843) (Fission yeast).